The primary structure comprises 247 residues: MEYHPDLENLDEDGYTQLHFDSQSNTRIAVVSEKGSCAASPPWRLIAVILGILCLVILVIAVVLGTMAIWRSNSGSNTLENGYFLSRNKENHSQPTQSSLEDSVTPTKAVKTTGVLSSPCPPNWIIYEKSCYLFSMSLNSWDGSKRQCWQLGSNLLKIDSSNELGFIVKQVSSQPDNSFWIGLSRPQTEVPWLWEDGSTFSSNLFQIRTTATQENPSPNCVWIHVSVIYDQLCSVPSYSICEKKFSM.

At 1-44 (MEYHPDLENLDEDGYTQLHFDSQSNTRIAVVSEKGSCAASPPWR) the chain is on the cytoplasmic side. The short motif at 15-18 (YTQL) is the ITAM-like element. The helical; Signal-anchor for type II membrane protein transmembrane segment at 45-65 (LIAVILGILCLVILVIAVVLG) threads the bilayer. Topologically, residues 66 to 247 (TMAIWRSNSG…YSICEKKFSM (182 aa)) are extracellular. The N-linked (GlcNAc...) asparagine glycan is linked to asparagine 91. Intrachain disulfides connect cysteine 120–cysteine 131, cysteine 148–cysteine 241, and cysteine 220–cysteine 233. The C-type lectin domain maps to 127–242 (YEKSCYLFSM…CSVPSYSICE (116 aa)). Position 146-153 (146-153 (RQCWQLGS)) interacts with (1,3-beta-D-glucosyl)n. The a divalent metal cation site is built by lysine 157, aspartate 159, and glutamate 163. Glutamate 195 contacts (1,3-beta-D-glucosyl)n. Residue glutamate 242 coordinates a divalent metal cation.

In terms of assembly, homodimer. Interacts with SYK; participates in leukocyte activation in presence of fungal pathogens. Interacts with CD37; this interaction controls CLEC7A-mediated IL-6 production. Interacts with RANBP9. Phosphorylated on tyrosine residues in response to beta-glucan binding. As to expression, highly expressed in peripheral blood leukocytes and dendritic cells. Detected in spleen, bone marrow, lung, muscle, stomach and placenta.

The protein localises to the cell membrane. It is found in the cytoplasm. In terms of biological role, lectin that functions as a pattern recognizing receptor (PRR) specific for beta-1,3-linked and beta-1,6-linked glucans, which constitute cell wall constituents from pathogenic bacteria and fungi. Necessary for the TLR2-mediated inflammatory response and activation of NF-kappa-B: upon beta-glucan binding, recruits SYK via its ITAM motif and promotes a signaling cascade that activates some CARD domain-BCL10-MALT1 (CBM) signalosomes, leading to the activation of NF-kappa-B and MAP kinase p38 (MAPK11, MAPK12, MAPK13 and/or MAPK14) pathways which stimulate expression of genes encoding pro-inflammatory cytokines and chemokines. Enhances cytokine production in macrophages and dendritic cells. Mediates production of reactive oxygen species in the cell. Mediates phagocytosis of C.albicans conidia. Binds T-cells in a way that does not involve their surface glycans and plays a role in T-cell activation. Stimulates T-cell proliferation. Induces phosphorylation of SCIMP after binding beta-glucans. This chain is C-type lectin domain family 7 member A, found in Homo sapiens (Human).